Here is a 139-residue protein sequence, read N- to C-terminus: Transcription antitermination protein NusB (139 aa).

The protein belongs to the NusB family.

Functionally, involved in transcription antitermination. Required for transcription of ribosomal RNA (rRNA) genes. Binds specifically to the boxA antiterminator sequence of the ribosomal RNA (rrn) operons. This Pectobacterium carotovorum subsp. carotovorum (strain PC1) protein is Transcription antitermination protein NusB.